Here is a 495-residue protein sequence, read N- to C-terminus: tRNA modification GTPase MnmE (495 aa).

Residues arginine 28, glutamate 89, and lysine 128 each contribute to the (6S)-5-formyl-5,6,7,8-tetrahydrofolate site. The TrmE-type G domain maps to 223–417 (GVRIVLGGCP…LRAQTLHLLH (195 aa)). K(+) is bound at residue asparagine 233. GTP is bound by residues 233–238 (NAGKSS), 252–258 (SSVPGTT), and 277–280 (DTAG). Serine 237 serves as a coordination point for Mg(2+). Positions 252, 254, and 257 each coordinate K(+). Position 258 (threonine 258) interacts with Mg(2+). Position 495 (lysine 495) interacts with (6S)-5-formyl-5,6,7,8-tetrahydrofolate.

Belongs to the TRAFAC class TrmE-Era-EngA-EngB-Septin-like GTPase superfamily. TrmE GTPase family. In terms of assembly, homodimer. Heterotetramer of two MnmE and two MnmG subunits. The cofactor is K(+).

It is found in the cytoplasm. Its function is as follows. Exhibits a very high intrinsic GTPase hydrolysis rate. Involved in the addition of a carboxymethylaminomethyl (cmnm) group at the wobble position (U34) of certain tRNAs, forming tRNA-cmnm(5)s(2)U34. This chain is tRNA modification GTPase MnmE, found in Treponema pallidum (strain Nichols).